A 569-amino-acid polypeptide reads, in one-letter code: Potassium-transporting ATPase potassium-binding subunit (569 aa).

A run of 10 helical transmembrane segments spans residues leucine 3 to leucine 23, alanine 68 to leucine 88, valine 136 to valine 156, valine 179 to valine 199, leucine 259 to valine 279, histidine 284 to tyrosine 304, glycine 384 to glycine 404, alanine 422 to valine 442, leucine 490 to glycine 510, and leucine 534 to leucine 554.

This sequence belongs to the KdpA family. As to quaternary structure, the system is composed of three essential subunits: KdpA, KdpB and KdpC.

Its subcellular location is the cell inner membrane. Its function is as follows. Part of the high-affinity ATP-driven potassium transport (or Kdp) system, which catalyzes the hydrolysis of ATP coupled with the electrogenic transport of potassium into the cytoplasm. This subunit binds the periplasmic potassium ions and delivers the ions to the membrane domain of KdpB through an intramembrane tunnel. The chain is Potassium-transporting ATPase potassium-binding subunit from Nitratidesulfovibrio vulgaris (strain DP4) (Desulfovibrio vulgaris).